A 331-amino-acid chain; its full sequence is tRNA-cytidine(32) 2-sulfurtransferase (331 aa).

Positions 73-78 (SGGKDS) match the PP-loop motif motif. Cysteine 148, cysteine 151, and cysteine 239 together coordinate [4Fe-4S] cluster.

Belongs to the TtcA family. In terms of assembly, homodimer. Requires Mg(2+) as cofactor. It depends on [4Fe-4S] cluster as a cofactor.

Its subcellular location is the cytoplasm. It catalyses the reaction cytidine(32) in tRNA + S-sulfanyl-L-cysteinyl-[cysteine desulfurase] + AH2 + ATP = 2-thiocytidine(32) in tRNA + L-cysteinyl-[cysteine desulfurase] + A + AMP + diphosphate + H(+). Its pathway is tRNA modification. In terms of biological role, catalyzes the ATP-dependent 2-thiolation of cytidine in position 32 of tRNA, to form 2-thiocytidine (s(2)C32). The sulfur atoms are provided by the cysteine/cysteine desulfurase (IscS) system. The polypeptide is tRNA-cytidine(32) 2-sulfurtransferase (Burkholderia mallei (strain NCTC 10247)).